The chain runs to 328 residues: GMP reductase (328 aa).

Cysteine 176 acts as the Thioimidate intermediate in catalysis. 205-228 (IIADGGIRTHGDIAKSIRFGASMI) contributes to the NADP(+) binding site.

Belongs to the IMPDH/GMPR family. GuaC type 2 subfamily.

The catalysed reaction is IMP + NH4(+) + NADP(+) = GMP + NADPH + 2 H(+). In terms of biological role, catalyzes the irreversible NADPH-dependent deamination of GMP to IMP. It functions in the conversion of nucleobase, nucleoside and nucleotide derivatives of G to A nucleotides, and in maintaining the intracellular balance of A and G nucleotides. The sequence is that of GMP reductase from Streptococcus pneumoniae serotype 4 (strain ATCC BAA-334 / TIGR4).